Reading from the N-terminus, the 88-residue chain is Mitochondrial import inner membrane translocase subunit tim9 (88 aa).

Residues 35–59 (CFTACVDDFTSKALSGRESGCISRC) carry the Twin CX3C motif motif. Cystine bridges form between Cys35–Cys59 and Cys39–Cys55.

Belongs to the small Tim family. In terms of assembly, heterohexamer; composed of 3 copies of tim9 and 3 copies of tim10, named soluble 70 kDa complex. Associates with the tim22 complex, whose core is composed of tim22 and tim54. Interacts with the transmembrane regions of multi-pass transmembrane proteins in transit.

It is found in the mitochondrion inner membrane. Its function is as follows. Mitochondrial intermembrane chaperone that participates in the import and insertion of multi-pass transmembrane proteins into the mitochondrial inner membrane. Also required for the transfer of beta-barrel precursors from the TOM complex to the sorting and assembly machinery (SAM complex) of the outer membrane. Acts as a chaperone-like protein that protects the hydrophobic precursors from aggregation and guide them through the mitochondrial intermembrane space. The chain is Mitochondrial import inner membrane translocase subunit tim9 (tim9) from Neurospora crassa (strain ATCC 24698 / 74-OR23-1A / CBS 708.71 / DSM 1257 / FGSC 987).